Reading from the N-terminus, the 194-residue chain is MKIWTSEHVFDHPWETVTTAAMQKYPNPMNPSVVGVDVLDRHIDPSGKLHSHRLLSTEWGLPSIVKSLIGAARTKTYVQEHSVVDPVEKTMELKSTNISFTNMVSVDERLIYKPHPQDPDKTILTQEAIITVKGVSLSSYLEGLMASTISSNASKGREAMEWVIHKLNAEIEELTASARGTIRTPMAAAAFAEK.

The region spanning 1 to 172 (MKIWTSEHVF…VIHKLNAEIE (172 aa)) is the PRELI/MSF1 domain. Phosphoserine is present on residues serine 46 and serine 51.

The protein belongs to the slowmo family.

The chain is PRELI domain containing protein 3B (PRELID3B) from Macaca fascicularis (Crab-eating macaque).